Here is a 354-residue protein sequence, read N- to C-terminus: uncharacterized protein (354 aa).

The next 9 membrane-spanning stretches (helical) occupy residues 9–29 (MGKI…LIFS), 31–51 (ISIN…ISFT), 76–96 (NFGI…LIWV), 109–129 (FLNV…AIVV), 144–164 (IIFS…VLLI), 185–205 (GILV…ALGV), 278–298 (YGTL…GFFY), 306–326 (GIYL…IESG), and 327–347 (ILDI…IYAI).

It is found in the cell membrane. This is an uncharacterized protein from Methanocaldococcus jannaschii (strain ATCC 43067 / DSM 2661 / JAL-1 / JCM 10045 / NBRC 100440) (Methanococcus jannaschii).